The chain runs to 146 residues: 3-dehydroquinate dehydratase (146 aa).

Y23 functions as the Proton acceptor in the catalytic mechanism. Substrate contacts are provided by N74, H80, and D87. The active-site Proton donor is H100. Residues 101–102 and R111 contribute to the substrate site; that span reads IS.

This sequence belongs to the type-II 3-dehydroquinase family. Homododecamer.

It catalyses the reaction 3-dehydroquinate = 3-dehydroshikimate + H2O. The protein operates within metabolic intermediate biosynthesis; chorismate biosynthesis; chorismate from D-erythrose 4-phosphate and phosphoenolpyruvate: step 3/7. In terms of biological role, catalyzes a trans-dehydration via an enolate intermediate. This chain is 3-dehydroquinate dehydratase, found in Bacillus cereus (strain ATCC 14579 / DSM 31 / CCUG 7414 / JCM 2152 / NBRC 15305 / NCIMB 9373 / NCTC 2599 / NRRL B-3711).